Here is a 149-residue protein sequence, read N- to C-terminus: Transcriptional regulator MraZ (149 aa).

SpoVT-AbrB domains are found at residues 7–54 and 83–126; these read KYIN…GIAH and AVQL…QPQN.

The protein belongs to the MraZ family. As to quaternary structure, forms oligomers.

It is found in the cytoplasm. It localises to the nucleoid. In Rickettsia typhi (strain ATCC VR-144 / Wilmington), this protein is Transcriptional regulator MraZ.